We begin with the raw amino-acid sequence, 1290 residues long: 1-phosphatidylinositol 4,5-bisphosphate phosphodiesterase gamma-1 (1290 aa).

An N-acetylalanine modification is found at Ala-2. Positions 27–142 constitute a PH 1 domain; the sequence is RSLEVGTVMT…WIKGLTWLME (116 aa). The EF-hand domain maps to 152–187; the sequence is QIERWLRKQFYSVDRNREDRISAKDLKNMLSQVNYR. Ca(2+) is bound by residues Asp-165, Asn-167, Glu-169, Arg-171, and Asp-176. A PI-PLC X-box domain is found at 320–464; the sequence is ETMNNPLSHY…LKRKILIKHK (145 aa). Residues His-335 and His-380 contribute to the active site. The region spanning 489 to 523 is the PH 2; first part domain; sequence SIKNGILYLEDPVNHEWYPHYFVLTSSKIYYSEET. Phosphotyrosine is present on Tyr-506. The disordered stretch occupies residues 522-546; that stretch reads ETSSDQGNEDEEEPKEASGSTELHS. 2 SH2 domains span residues 550-657 and 668-756; these read WFHG…SEPV and WYHA…RYPI. Position 771 is a phosphotyrosine; by SYK (Tyr-771). Tyr-775 carries the phosphotyrosine modification. Residue Tyr-783 is modified to Phosphotyrosine; by ITK, SYK and TXK. The 61-residue stretch at 791–851 folds into the SH3 domain; sequence TFKCAVKALF…PSNYVEEMIN (61 aa). The region spanning 895 to 931 is the PH 2; second part domain; the sequence is FVFSISMPSVAQWSLDVAADSQEELQDWVKKIREVAQ. The PI-PLC Y-box domain maps to 953 to 1070; sequence LSELVVYCRP…GYVLQPSTMR (118 aa). Position 977 is a phosphotyrosine (Tyr-977). Residues 1071–1194 form the C2 domain; that stretch reads DEAFDPFDKS…TGYRAVPLKN (124 aa). Ser-1221, Ser-1227, Ser-1233, and Ser-1248 each carry phosphoserine. At Tyr-1253 the chain carries Phosphotyrosine. Phosphoserine is present on Ser-1263. A disordered region spans residues 1271–1290; the sequence is FDSRERRAPRRTRVNGDNRL.

In terms of assembly, interacts with AGAP2 via its SH3 domain. Interacts (via SH2 domain) with RET. Interacts with FLT1 (tyrosine-phosphorylated). Interacts (via SH2 domain) with FGFR1, FGFR2, FGFR3 and FGFR4 (phosphorylated). Interacts with LAT (phosphorylated) upon TCR activation. Interacts (via SH3 domain) with the Pro-rich domain of TNK1. Associates with BLNK, VAV1, GRB2 and NCK1 in a B-cell antigen receptor-dependent fashion. Interacts with CBLB in activated T-cells; which inhibits phosphorylation. Interacts with SHB. Interacts (via SH3 domain) with the Arg/Gly-rich-flanked Pro-rich domains of KHDRBS1/SAM68. This interaction is selectively regulated by arginine methylation of KHDRBS1/SAM68. Interacts with INPP5D/SHIP1, THEMIS and CLNK. Interacts with AXL, FLT4 and KIT. Interacts with RALGPS1. Interacts (via the SH2 domains) with VIL1 (phosphorylated at C-terminus tyrosine phosphorylation sites). Interacts (via SH2 domain) with PDGFRA and PDGFRB (tyrosine phosphorylated). Interacts with PIP5K1C. Interacts with NTRK1 and NTRK2 (phosphorylated upon ligand-binding). Interacts with SYK; activates PLCG1. Interacts with GRB2, LAT and THEMIS upon TCR activation in thymocytes. Interacts with TESPA1; the association is increased with prolonged stimulation of the TCR and may facilitate the assembly of the LAT signalosome. Interacts (via C-terminal proline-rich domain (PRD)) with PLCG1 (via SH3 domain); this interaction leads to guanine nucleotide exchange from PlCG1 to DNM1 and enhances DNM1-dependent endocytosis. Ca(2+) is required as a cofactor. Ubiquitinated by CBLB in activated T-cells. In terms of processing, tyrosine phosphorylated in response to signaling via activated FLT3, KIT and PDGFRA. Tyrosine phosphorylated by activated FGFR1, FGFR2, FGFR3 and FGFR4. Tyrosine phosphorylated by activated FLT1 and KDR. Tyrosine phosphorylated by activated PDGFRB. The receptor-mediated activation of PLCG1 involves its phosphorylation by tyrosine kinases, in response to ligation of a variety of growth factor receptors and immune system receptors. For instance, SYK phosphorylates and activates PLCG1 in response to ligation of the B-cell receptor. May be dephosphorylated by PTPRJ. Phosphorylated by ITK and TXK on Tyr-783 upon TCR activation in T-cells.

Its subcellular location is the cell projection. The protein localises to the lamellipodium. It localises to the ruffle. The catalysed reaction is a 1,2-diacyl-sn-glycero-3-phospho-(1D-myo-inositol-4,5-bisphosphate) + H2O = 1D-myo-inositol 1,4,5-trisphosphate + a 1,2-diacyl-sn-glycerol + H(+). The enzyme catalyses a 1,2-diacyl-sn-glycero-3-phospho-(1D-myo-inositol) + H2O = 1D-myo-inositol 1-phosphate + a 1,2-diacyl-sn-glycerol + H(+). Its activity is regulated as follows. Activated by phosphorylation on tyrosine residues. Functionally, mediates the production of the second messenger molecules diacylglycerol (DAG) and inositol 1,4,5-trisphosphate (IP3). Plays an important role in the regulation of intracellular signaling cascades. Becomes activated in response to ligand-mediated activation of receptor-type tyrosine kinases, such as PDGFRA, PDGFRB, EGFR, FGFR1, FGFR2, FGFR3 and FGFR4. Plays a role in actin reorganization and cell migration. Guanine nucleotide exchange factor that binds the GTPase DNM1 and catalyzes the dissociation of GDP, allowing a GTP molecule to bind in its place, therefore enhancing DNM1-dependent endocytosis. The polypeptide is 1-phosphatidylinositol 4,5-bisphosphate phosphodiesterase gamma-1 (Rattus norvegicus (Rat)).